The primary structure comprises 702 residues: Elongation factor G (702 aa).

Residues 8 to 290 form the tr-type G domain; the sequence is CQYRNIGISA…AIIEYLPAPN (283 aa). GTP contacts are provided by residues 17 to 24, 88 to 92, and 142 to 145; these read AHIDAGKT, DTPGH, and NKMD.

This sequence belongs to the TRAFAC class translation factor GTPase superfamily. Classic translation factor GTPase family. EF-G/EF-2 subfamily.

It localises to the cytoplasm. Its function is as follows. Catalyzes the GTP-dependent ribosomal translocation step during translation elongation. During this step, the ribosome changes from the pre-translocational (PRE) to the post-translocational (POST) state as the newly formed A-site-bound peptidyl-tRNA and P-site-bound deacylated tRNA move to the P and E sites, respectively. Catalyzes the coordinated movement of the two tRNA molecules, the mRNA and conformational changes in the ribosome. The polypeptide is Elongation factor G (Buchnera aphidicola subsp. Schizaphis graminum (strain Sg)).